The primary structure comprises 157 residues: Glutathione peroxidase (157 aa).

Residue C35 is part of the active site.

Belongs to the glutathione peroxidase family.

It carries out the reaction 2 glutathione + H2O2 = glutathione disulfide + 2 H2O. This chain is Glutathione peroxidase (gpo), found in Lactococcus lactis subsp. cremoris (strain MG1363).